We begin with the raw amino-acid sequence, 253 residues long: PAXIP1-associated glutamate-rich protein 1A (253 aa).

2 disordered regions span residues 1 to 108 (MSLA…MPPP) and 126 to 253 (LQAE…QRKY). Residues 45–66 (KAEEEGKGSQEEAGREGSRPEE) show a composition bias toward basic and acidic residues. Positions 115–159 (YELLATQGTLELQAEILPRRPPTPEAQSEEERSDEEPEAKEEEEE) are sufficient for interaction with NCOA1. Thr-137 carries the phosphothreonine modification. The segment covering 141 to 158 (QSEEERSDEEPEAKEEEE) has biased composition (acidic residues). Residues Ser-142 and Ser-147 each carry the phosphoserine modification. The tract at residues 160 to 253 (KPHMPTEFDF…NSLFPRQRKY (94 aa)) is sufficient for interaction with ESR1. Positions 194-222 (QKREARLDKVLSDMKRHKKLEEQILRTGR) are enriched in basic and acidic residues. Ser-236 is subject to Phosphoserine. Over residues 238-247 (PLRSSGNSLF) the composition is skewed to polar residues.

As to quaternary structure, component of the KMT2 family MLL2/MLL3 complex, at least composed of the histone methyltransferases KMT2D and/or KMT2C, the common subunits ASH2L, RBBP5, WDR5 and DPY30, and the complex type-specific subunits PAXIP1/PTIP, PAGR1, NCOA6 and KDM6A; PAXIP1 is required for the association with the MLL2/MLL3 complex. Forms a constitutive complex with PAXIP1/PTIP independently of the MLL2/MLL3 complex. Interacts with NCOA1, ESR1, NR3C1, AR.

The protein resides in the nucleus. Functionally, its association with the histone methyltransferase MLL2/MLL3 complex is suggesting a role in epigenetic transcriptional activation. However, in association with PAXIP1/PTIP is proposed to function at least in part independently of the MLL2/MLL3 complex. Proposed to be recruited by PAXIP1 to sites of DNA damage where the PAGR1:PAXIP1 complex is required for cell survival in response to DNA damage independently of the MLL2/MLL3 complex. However, its function in DNA damage has been questioned. During immunoglobulin class switching in activated B-cells is involved in transcription regulation of downstream switch regions at the immunoglobulin heavy-chain (Igh) locus independently of the MLL2/MLL3 complex. Involved in both estrogen receptor-regulated gene transcription and estrogen-stimulated G1/S cell-cycle transition. Acts as a transcriptional cofactor for nuclear hormone receptors. Inhibits the induction properties of several steroid receptors such as NR3C1, AR and PPARG; the mechanism of inhibition appears to be gene-dependent. May be involved in the regulation of the BMP pathway in extraembryonic development. This Mus musculus (Mouse) protein is PAXIP1-associated glutamate-rich protein 1A.